The sequence spans 1062 residues: Probable sucrose-phosphate synthase 3 (1062 aa).

Basic and acidic residues predominate over residues 113–122 (EREQGRRDAT). Residues 113–141 (EREQGRRDATEDLSEDLSEGEKGDGLGEI) are disordered. A phosphoserine mark is found at S126, S130, and S156. A disordered region spans residues 715–735 (MDGDKPSLNGSLEPNSADPVK).

This sequence belongs to the glycosyltransferase 1 family. Homodimer or homotetramer.

The catalysed reaction is beta-D-fructose 6-phosphate + UDP-alpha-D-glucose = sucrose 6(F)-phosphate + UDP + H(+). It participates in glycan biosynthesis; sucrose biosynthesis; sucrose from D-fructose 6-phosphate and UDP-alpha-D-glucose: step 1/2. Activity is regulated by phosphorylation and moderated by concentration of metabolites and light. Functionally, plays a role in photosynthetic sucrose synthesis by catalyzing the rate-limiting step of sucrose biosynthesis from UDP-glucose and fructose- 6-phosphate. Involved in the regulation of carbon partitioning in the leaves of plants. May regulate the synthesis of sucrose and therefore play a major role as a limiting factor in the export of photoassimilates out of the leaf. Plays a role for sucrose availability that is essential for plant growth and fiber elongation. The sequence is that of Probable sucrose-phosphate synthase 3 (SPS3) from Arabidopsis thaliana (Mouse-ear cress).